Consider the following 491-residue polypeptide: Synaptotagmin-9 (491 aa).

The Vesicular segment spans residues 1–52 (MPGARDALCHQALQLLAELCARGALEHDSCQDFIYHLRDRARPRLRDPDISV). A cysteine motif region spans residues 9-31 (CHQALQLLAELCARGALEHDSCQ). The chain crosses the membrane as a helical span at residues 53–73 (SLLTLVVTACGLALFGVSLFV). Residues 74–491 (SWKLCWVPWR…AHWHSLLEKR (418 aa)) are Cytoplasmic-facing. Polar residues predominate over residues 91–104 (SKDNNQEPLNYTDT). Residues 91 to 147 (SKDNNQEPLNYTDTETNEQENSEDFLDPPTPCPDSSMKISHTSPDIPLSTQPGGQDN) form a disordered region. The segment covering 105–116 (ETNEQENSEDFL) has biased composition (acidic residues). Residues 127–144 (MKISHTSPDIPLSTQPGG) show a composition bias toward polar residues. A Phosphoserine modification is found at S177. C2 domains follow at residues 220-341 (ACGK…ILWK) and 352-485 (DLGE…AHWH). Residues D251, D257, D309, F310, D311, S314, D317, D383, D389, D443, and D445 each contribute to the Ca(2+) site.

Belongs to the synaptotagmin family. In terms of assembly, homodimer; disulfide-linked via the cysteine motif. Can also form heterodimers with SYT3, SYT6, SYT7 and SYT10. Requires Ca(2+) as cofactor.

It localises to the cytoplasmic vesicle. It is found in the secretory vesicle. The protein localises to the synaptic vesicle membrane. Functionally, may be involved in Ca(2+)-dependent exocytosis of secretory vesicles through Ca(2+) and phospholipid binding to the C2 domain or may serve as Ca(2+) sensors in the process of vesicular trafficking and exocytosis. This chain is Synaptotagmin-9 (Syt9), found in Rattus norvegicus (Rat).